Consider the following 658-residue polypeptide: Structure-specific endonuclease subunit SLX4 (658 aa).

Disordered stretches follow at residues 17–37 (VDSDSPMQEQDELPMTQIPGD), 74–123 (GATE…KSIT), and 327–383 (QPGV…QVLQ). Composition is skewed to low complexity over residues 75-90 (ATESAPPSRAATPPAK) and 99-108 (KAAGRTSTGT). Over residues 365–374 (FPKSPTSTPE) the composition is skewed to polar residues.

The protein belongs to the SLX4 family. In terms of assembly, forms a heterodimer with SLX1. Phosphorylated in response to DNA damage.

The protein resides in the nucleus. Functionally, regulatory subunit of the SLX1-SLX4 structure-specific endonuclease that resolves DNA secondary structures generated during DNA repair and recombination. Has endonuclease activity towards branched DNA substrates, introducing single-strand cuts in duplex DNA close to junctions with ss-DNA. The sequence is that of Structure-specific endonuclease subunit SLX4 from Lachancea thermotolerans (strain ATCC 56472 / CBS 6340 / NRRL Y-8284) (Yeast).